The sequence spans 129 residues: UPF0102 protein Ctha_1382 (129 aa).

The protein belongs to the UPF0102 family.

This chain is UPF0102 protein Ctha_1382, found in Chloroherpeton thalassium (strain ATCC 35110 / GB-78).